The chain runs to 673 residues: Mechanosensitive ion channel protein 2, chloroplastic (673 aa).

The N-terminal 75 residues, 1-75 (MALYGTLQLS…SVPCRTTAFR (75 aa)), are a transit peptide targeting the chloroplast. 5 helical membrane passes run 107 to 127 (FPFVYKLVPAVALLVFSLWGL), 152 to 172 (YHVMTSYVQPLLLWLGALFIC), 193 to 213 (LNFVRSLSTVLAFAYCLSSLI), 240 to 260 (ALYSAVWVAAVSLFMELLGFS), and 264 to 284 (WLTAGGLGTVLITLAGREILT). Positions 492 to 673 (KINGEDKSKS…QPNSGASTEP (182 aa)) are disordered. Composition is skewed to basic and acidic residues over residues 510–525 (AEQENKGSNPKSKETS), 564–576 (TPKDTETSGTEKP), and 617–642 (GSKRTLPIEEEIHSPPMETDAKELTG). S571 carries the post-translational modification Phosphoserine. A compositionally biased stretch (polar residues) spans 661–673 (SQSQPNSGASTEP).

The protein belongs to the MscS (TC 1.A.23) family. In terms of tissue distribution, widely expressed.

It localises to the plastid. The protein localises to the chloroplast membrane. Functionally, mechanosensitive channel that opens in response to stretch forces in the membrane lipid bilayer. Controls plastid size, shape, and perhaps division during normal plant development by altering ion flux in response to changes in membrane tension. Acts as a component of the chloroplast division machinery. The chain is Mechanosensitive ion channel protein 2, chloroplastic (MSL2) from Arabidopsis thaliana (Mouse-ear cress).